We begin with the raw amino-acid sequence, 456 residues long: Major facilitator superfamily domain-containing protein 10 (456 aa).

3 consecutive transmembrane segments (helical) span residues 25-45 (VIIVLFLGLLLDLLAFTLLLP), 87-107 (VLFGGLIGSAFSLLQFFSAPL), and 114-136 (YLGRRPVMMLSLTGLAISYAVWA). N159 carries an N-linked (GlcNAc...) asparagine glycan. 8 helical membrane-spanning segments follow: residues 179-199 (AVIGVAFSLAFTLGPMLGAFL), 203-223 (MVPWISLLFAISDMLFIFCFL), 278-298 (LVYFLYLFLFSGLEYTLSFLA), 311-328 (KMFFFIGLTMATIQGTYA), 345-365 (LLLVPAFLLIGWAHSLPTLGL), 366-386 (GLMLYSFAAAVVVPGLSTMVS), 403-423 (SLGALGRALGPVVAASVYWLT), and 424-444 (GAQVCFTVCSALFLLPFLLLW).

This sequence belongs to the major facilitator superfamily. In terms of tissue distribution, esxpressed in luminal membrane of renal tubules. Expressed at the surface of eosinophils (at protein level).

It is found in the nucleus inner membrane. The protein localises to the cell membrane. In terms of biological role, probable organic anion transporter which may serve as a transporter for some non-steroidal anti-inflammatory drugs (NSAIDs) as well as other organic anions across the luminal membranes of renal proximal tubules at the final excretion step into the urine. The polypeptide is Major facilitator superfamily domain-containing protein 10 (Mfsd10) (Mus musculus (Mouse)).